A 309-amino-acid chain; its full sequence is ADP-L-glycero-D-manno-heptose-6-epimerase (309 aa).

NADP(+)-binding positions include 10–11 (LI), 31–32 (DN), Lys-38, Lys-53, 75–79 (QGACS), and Asn-92. The active-site Proton acceptor is the Tyr-139. Lys-143 provides a ligand contact to NADP(+). Substrate is bound at residue Asn-168. NADP(+) contacts are provided by Val-169 and Lys-177. The active-site Proton acceptor is the Lys-177. Residues Ser-179, His-186, 200–203 (FAGS), Arg-208, and Tyr-271 contribute to the substrate site.

The protein belongs to the NAD(P)-dependent epimerase/dehydratase family. HldD subfamily. In terms of assembly, homopentamer. Requires NADP(+) as cofactor.

The enzyme catalyses ADP-D-glycero-beta-D-manno-heptose = ADP-L-glycero-beta-D-manno-heptose. Its pathway is nucleotide-sugar biosynthesis; ADP-L-glycero-beta-D-manno-heptose biosynthesis; ADP-L-glycero-beta-D-manno-heptose from D-glycero-beta-D-manno-heptose 7-phosphate: step 4/4. Functionally, catalyzes the interconversion between ADP-D-glycero-beta-D-manno-heptose and ADP-L-glycero-beta-D-manno-heptose via an epimerization at carbon 6 of the heptose. This is ADP-L-glycero-D-manno-heptose-6-epimerase from Histophilus somni (strain 2336) (Haemophilus somnus).